The primary structure comprises 206 residues: MSSDRRTARDCSAVFFGEFHDVHVGRAARSRRVHSQPHPHGAGLAAARRDVSRHHAALQSAKALRVLVDLFVERYVDAKLDYIAGLDARGFIIAPIVAYELSVGFVPIRKVGKLPYATQRESYALEYGTATVEIHEDACKPGDRVVIVDDLIATGGTMMAGKNLLERLGAVVVEGAAIVDLPDLGGSALLREAGLPLYTVTEFPGH.

It belongs to the purine/pyrimidine phosphoribosyltransferase family. In terms of assembly, homodimer.

It is found in the cytoplasm. It carries out the reaction AMP + diphosphate = 5-phospho-alpha-D-ribose 1-diphosphate + adenine. Its pathway is purine metabolism; AMP biosynthesis via salvage pathway; AMP from adenine: step 1/1. Its function is as follows. Catalyzes a salvage reaction resulting in the formation of AMP, that is energically less costly than de novo synthesis. In Burkholderia mallei (strain NCTC 10229), this protein is Adenine phosphoribosyltransferase.